The chain runs to 281 residues: DegV domain-containing protein CA_C0948 (281 aa).

A DegV domain is found at 4 to 280; that stretch reads IAIITDTTAD…PGLVGLVLLE (277 aa). Positions 60 and 93 each coordinate hexadecanoate.

Functionally, may bind long-chain fatty acids, such as palmitate, and may play a role in lipid transport or fatty acid metabolism. This is DegV domain-containing protein CA_C0948 from Clostridium acetobutylicum (strain ATCC 824 / DSM 792 / JCM 1419 / IAM 19013 / LMG 5710 / NBRC 13948 / NRRL B-527 / VKM B-1787 / 2291 / W).